A 258-amino-acid polypeptide reads, in one-letter code: DNA repair protein RecO (258 aa).

It belongs to the RecO family.

Its function is as follows. Involved in DNA repair and RecF pathway recombination. This chain is DNA repair protein RecO, found in Syntrophotalea carbinolica (strain DSM 2380 / NBRC 103641 / GraBd1) (Pelobacter carbinolicus).